The sequence spans 417 residues: Gamma-glutamyl phosphate reductase (417 aa).

It belongs to the gamma-glutamyl phosphate reductase family.

The protein resides in the cytoplasm. It catalyses the reaction L-glutamate 5-semialdehyde + phosphate + NADP(+) = L-glutamyl 5-phosphate + NADPH + H(+). It participates in amino-acid biosynthesis; L-proline biosynthesis; L-glutamate 5-semialdehyde from L-glutamate: step 2/2. In terms of biological role, catalyzes the NADPH-dependent reduction of L-glutamate 5-phosphate into L-glutamate 5-semialdehyde and phosphate. The product spontaneously undergoes cyclization to form 1-pyrroline-5-carboxylate. The protein is Gamma-glutamyl phosphate reductase of Clostridium novyi (strain NT).